A 250-amino-acid polypeptide reads, in one-letter code: Ubiquinone/menaquinone biosynthesis C-methyltransferase UbiE (250 aa).

Residues Ser-73, Asp-94, and 122–123 (NA) contribute to the S-adenosyl-L-methionine site.

This sequence belongs to the class I-like SAM-binding methyltransferase superfamily. MenG/UbiE family.

The enzyme catalyses a 2-demethylmenaquinol + S-adenosyl-L-methionine = a menaquinol + S-adenosyl-L-homocysteine + H(+). It catalyses the reaction a 2-methoxy-6-(all-trans-polyprenyl)benzene-1,4-diol + S-adenosyl-L-methionine = a 5-methoxy-2-methyl-3-(all-trans-polyprenyl)benzene-1,4-diol + S-adenosyl-L-homocysteine + H(+). It functions in the pathway quinol/quinone metabolism; menaquinone biosynthesis; menaquinol from 1,4-dihydroxy-2-naphthoate: step 2/2. Its pathway is cofactor biosynthesis; ubiquinone biosynthesis. Its function is as follows. Methyltransferase required for the conversion of demethylmenaquinol (DMKH2) to menaquinol (MKH2) and the conversion of 2-polyprenyl-6-methoxy-1,4-benzoquinol (DDMQH2) to 2-polyprenyl-3-methyl-6-methoxy-1,4-benzoquinol (DMQH2). This Legionella pneumophila subsp. pneumophila (strain Philadelphia 1 / ATCC 33152 / DSM 7513) protein is Ubiquinone/menaquinone biosynthesis C-methyltransferase UbiE.